Reading from the N-terminus, the 56-residue chain is Male determiner protein Yob (56 aa).

Male determiner protein (M-factor) that controls male somatic sexual differentiation. Acts as a dominant factor that regulates the mRNA splicing of doublesex (dsx) transcripts and promotes expression of male splice forms of dsx. The sequence is that of Male determiner protein Yob from Anopheles gambiae (African malaria mosquito).